The chain runs to 416 residues: D-amino acid dehydrogenase (416 aa).

Residue 3–17 participates in FAD binding; sequence ITILGSGVIGVTTAY.

The protein belongs to the DadA oxidoreductase family. Requires FAD as cofactor.

It catalyses the reaction a D-alpha-amino acid + A + H2O = a 2-oxocarboxylate + AH2 + NH4(+). It functions in the pathway amino-acid degradation; D-alanine degradation; NH(3) and pyruvate from D-alanine: step 1/1. Oxidative deamination of D-amino acids. The protein is D-amino acid dehydrogenase of Brucella anthropi (strain ATCC 49188 / DSM 6882 / CCUG 24695 / JCM 21032 / LMG 3331 / NBRC 15819 / NCTC 12168 / Alc 37) (Ochrobactrum anthropi).